The sequence spans 647 residues: Threonine--tRNA ligase (647 aa).

One can recognise a TGS domain in the interval 1–63; that stretch reads MYMIQLTFPD…EHDGKIELVM (63 aa). The tract at residues 247–544 is catalytic; it reads DHRKLGKELD…LIEEYKGAFP (298 aa). The Zn(2+) site is built by cysteine 340, histidine 391, and histidine 521.

This sequence belongs to the class-II aminoacyl-tRNA synthetase family. Homodimer. The cofactor is Zn(2+).

The protein localises to the cytoplasm. It catalyses the reaction tRNA(Thr) + L-threonine + ATP = L-threonyl-tRNA(Thr) + AMP + diphosphate + H(+). Catalyzes the attachment of threonine to tRNA(Thr) in a two-step reaction: L-threonine is first activated by ATP to form Thr-AMP and then transferred to the acceptor end of tRNA(Thr). Also edits incorrectly charged L-seryl-tRNA(Thr). The sequence is that of Threonine--tRNA ligase from Exiguobacterium sp. (strain ATCC BAA-1283 / AT1b).